Consider the following 211-residue polypeptide: Endo-1,4-beta-xylanase 4 (211 aa).

Positions 1-16 (MKVTAAFAGLLVTAFA) are cleaved as a signal peptide. Residues 19 to 210 (VPEPVLVSRS…GACSASVTIS (192 aa)) enclose the GH11 domain. The N-linked (GlcNAc...) asparagine glycan is linked to N101. E106 (nucleophile) is an active-site residue. E197 serves as the catalytic Proton donor.

It belongs to the glycosyl hydrolase 11 (cellulase G) family.

Its subcellular location is the secreted. It catalyses the reaction Endohydrolysis of (1-&gt;4)-beta-D-xylosidic linkages in xylans.. The protein operates within glycan degradation; xylan degradation. In terms of biological role, endo-1,4-beta-xylanase involved in the hydrolysis of xylan, a major structural heterogeneous polysaccharide found in plant biomass representing the second most abundant polysaccharide in the biosphere, after cellulose. In Aspergillus niger, this protein is Endo-1,4-beta-xylanase 4 (XYN4).